Consider the following 618-residue polypeptide: Dihydroxy-acid dehydratase 1 (618 aa).

Asp-81 is a binding site for Mg(2+). Cys-122 is a binding site for [2Fe-2S] cluster. Positions 123 and 124 each coordinate Mg(2+). Position 124 is an N6-carboxylysine (Lys-124). A [2Fe-2S] cluster-binding site is contributed by Cys-195. Position 491 (Glu-491) interacts with Mg(2+). Residue Ser-517 is the Proton acceptor of the active site.

The protein belongs to the IlvD/Edd family. In terms of assembly, homodimer. Requires [2Fe-2S] cluster as cofactor. It depends on Mg(2+) as a cofactor.

The enzyme catalyses (2R)-2,3-dihydroxy-3-methylbutanoate = 3-methyl-2-oxobutanoate + H2O. The catalysed reaction is (2R,3R)-2,3-dihydroxy-3-methylpentanoate = (S)-3-methyl-2-oxopentanoate + H2O. The protein operates within amino-acid biosynthesis; L-isoleucine biosynthesis; L-isoleucine from 2-oxobutanoate: step 3/4. Its pathway is amino-acid biosynthesis; L-valine biosynthesis; L-valine from pyruvate: step 3/4. Functions in the biosynthesis of branched-chain amino acids. Catalyzes the dehydration of (2R,3R)-2,3-dihydroxy-3-methylpentanoate (2,3-dihydroxy-3-methylvalerate) into 2-oxo-3-methylpentanoate (2-oxo-3-methylvalerate) and of (2R)-2,3-dihydroxy-3-methylbutanoate (2,3-dihydroxyisovalerate) into 2-oxo-3-methylbutanoate (2-oxoisovalerate), the penultimate precursor to L-isoleucine and L-valine, respectively. This chain is Dihydroxy-acid dehydratase 1, found in Pseudoalteromonas translucida (strain TAC 125).